The chain runs to 192 residues: Mitochondrial import inner membrane translocase subunit Tim22 (192 aa).

Intrachain disulfides connect Cys-67/Cys-139 and Cys-158/Cys-177. Helical transmembrane passes span Val-72 to Ile-92, Tyr-123 to Val-141, and Ala-168 to Asp-188.

Belongs to the Tim17/Tim22/Tim23 family. As to quaternary structure, component of the TIM22 complex, whose core is composed of TIMM22, associated with peripheral protein FXC1/TIMM10B and the 70 kDa heterohexamer. In most cases, the 70 kDa complex is composed of TIMM9 and TIMM10 (TIMM10A or TIMM10B). A small fraction of the 70 kDa complex is composed of TIMM8 (TIMM8A/DDP1 or TIMM8B/DDP2) and TIMM13. The TIM22 complex also contains AGK and TIMM29. Interacts directly with TIMM9, TIMM10A and FXC1/TIMM10B. Interacts (when oxidized) with TIMM29; interaction is direct. Post-translationally, disulfide bonds promote efficient assembly of the TIM22 complex.

The protein resides in the mitochondrion inner membrane. Its function is as follows. Essential core component of the TIM22 complex, a complex that mediates the import and insertion of multi-pass transmembrane proteins into the mitochondrial inner membrane. In the TIM22 complex, it constitutes the voltage-activated and signal-gated channel. Forms a twin-pore translocase that uses the membrane potential as external driving force in 2 voltage-dependent steps. The sequence is that of Mitochondrial import inner membrane translocase subunit Tim22 (Timm22) from Rattus norvegicus (Rat).